Reading from the N-terminus, the 211-residue chain is MKKSILTAFYGGTFDPIHNGHIKSAIALAKLIHLNRIILIPNGSPVHKPIPVASAEDRINMINLAISEISEDIFEIDYREINNKIPSYTINTFENLRKEYGPKAPLGFILGQDSFMKLHTWYRGYDILKFCHLLICARSNNMINLKKIKFKFIDPKILHYIPFGLIYYAFTPIIKISSRNIRLRYKFGISCNGLISSSVQKYINKKNIYKR.

This sequence belongs to the NadD family.

The catalysed reaction is nicotinate beta-D-ribonucleotide + ATP + H(+) = deamido-NAD(+) + diphosphate. Its pathway is cofactor biosynthesis; NAD(+) biosynthesis; deamido-NAD(+) from nicotinate D-ribonucleotide: step 1/1. Its function is as follows. Catalyzes the reversible adenylation of nicotinate mononucleotide (NaMN) to nicotinic acid adenine dinucleotide (NaAD). This chain is Probable nicotinate-nucleotide adenylyltransferase, found in Wigglesworthia glossinidia brevipalpis.